Consider the following 200-residue polypeptide: dITP/XTP pyrophosphatase (200 aa).

Thr-8–Lys-13 is a binding site for substrate. Asp-69 functions as the Proton acceptor in the catalytic mechanism. Asp-69 serves as a coordination point for Mg(2+). Residues Ser-70, Phe-154–Asp-157, Lys-177, and His-182–Arg-183 each bind substrate.

The protein belongs to the HAM1 NTPase family. Homodimer. It depends on Mg(2+) as a cofactor.

It carries out the reaction XTP + H2O = XMP + diphosphate + H(+). It catalyses the reaction dITP + H2O = dIMP + diphosphate + H(+). The catalysed reaction is ITP + H2O = IMP + diphosphate + H(+). Its function is as follows. Pyrophosphatase that catalyzes the hydrolysis of nucleoside triphosphates to their monophosphate derivatives, with a high preference for the non-canonical purine nucleotides XTP (xanthosine triphosphate), dITP (deoxyinosine triphosphate) and ITP. Seems to function as a house-cleaning enzyme that removes non-canonical purine nucleotides from the nucleotide pool, thus preventing their incorporation into DNA/RNA and avoiding chromosomal lesions. The protein is dITP/XTP pyrophosphatase of Vibrio vulnificus (strain CMCP6).